Consider the following 728-residue polypeptide: Protein Hook homolog 1 (728 aa).

At M1 the chain carries N-acetylmethionine. The tract at residues 1–555 (MEDPQPLPQS…LKQKLEAHME (555 aa)) is sufficient for interaction with microtubules. The region spanning 12-128 (LPLCDSLIIW…RLLQLILGCA (117 aa)) is the Calponin-homology (CH) domain. Coiled-coil stretches lie at residues 168–443 (PASD…LNQA) and 477–658 (LRLQ…AKLR). S235 carries the phosphoserine modification. Residues 481–510 (QEGTENERIEQLQEQLEQKHRKMNELETEQ) are disordered. The tract at residues 657 to 728 (LRDYEEKLIV…SVKVPAAASD (72 aa)) is sufficient for interaction with AKTIP and VPS18. S719 and S727 each carry phosphoserine.

It belongs to the hook family. As to quaternary structure, self-associates. Component of the FTS/Hook/FHIP complex (FHF complex), composed of AKTIP/FTS, FHIP1B, and one or more members of the Hook family of proteins HOOK1, HOOK2, and HOOK3. Interacts directly with AKTIP/FTS, HOOK2 and HOOK3. Associates with several subunits of the homotypic vesicular sorting complex (the HOPS complex) including VPS16, VPS18, VPS39 and VPS41; these interactions may be indirect. Interacts with CCDC181. Interacts (via coiled-coil region) with RIMBP3 (via C-terminus). Interacts with LRGUK (via guanylate kinase-like domain). Interacts with microtubules. May interacts with CLN3. Interacts with AP4M1; the interaction is direct, mediates the interaction between FTS-Hook-FHIP (FHF) complex and AP-4 and the perinuclear distribution of AP-4. As to expression, mainly expressed in testis.

The protein resides in the cytoplasm. It localises to the cytoskeleton. Component of the FTS/Hook/FHIP complex (FHF complex). The FHF complex may function to promote vesicle trafficking and/or fusion via the homotypic vesicular protein sorting complex (the HOPS complex). FHF complex promotes the distribution of AP-4 complex to the perinuclear area of the cell. Required for spermatid differentiation. Probably involved in the positioning of the microtubules of the manchette and the flagellum in relation to the membrane skeleton. The chain is Protein Hook homolog 1 (Hook1) from Mus musculus (Mouse).